The chain runs to 370 residues: Anhydro-N-acetylmuramic acid kinase (370 aa).

Residue glycine 12–aspartate 19 coordinates ATP.

This sequence belongs to the anhydro-N-acetylmuramic acid kinase family.

It carries out the reaction 1,6-anhydro-N-acetyl-beta-muramate + ATP + H2O = N-acetyl-D-muramate 6-phosphate + ADP + H(+). The protein operates within amino-sugar metabolism; 1,6-anhydro-N-acetylmuramate degradation. It participates in cell wall biogenesis; peptidoglycan recycling. Functionally, catalyzes the specific phosphorylation of 1,6-anhydro-N-acetylmuramic acid (anhMurNAc) with the simultaneous cleavage of the 1,6-anhydro ring, generating MurNAc-6-P. Is required for the utilization of anhMurNAc either imported from the medium or derived from its own cell wall murein, and thus plays a role in cell wall recycling. The protein is Anhydro-N-acetylmuramic acid kinase of Pectobacterium carotovorum subsp. carotovorum (strain PC1).